The sequence spans 322 residues: Probable transposase for insertion sequence element ISA1214 (322 aa).

This sequence belongs to the transposase 11 family.

In terms of biological role, involved in the transposition of the insertion sequence ISA1214. The polypeptide is Probable transposase for insertion sequence element ISA1214 (Archaeoglobus fulgidus (strain ATCC 49558 / DSM 4304 / JCM 9628 / NBRC 100126 / VC-16)).